A 122-amino-acid polypeptide reads, in one-letter code: Large ribosomal subunit protein uL14 (122 aa).

The protein belongs to the universal ribosomal protein uL14 family. Part of the 50S ribosomal subunit. Forms a cluster with proteins L3 and L19. In the 70S ribosome, L14 and L19 interact and together make contacts with the 16S rRNA in bridges B5 and B8.

Binds to 23S rRNA. Forms part of two intersubunit bridges in the 70S ribosome. This chain is Large ribosomal subunit protein uL14, found in Sulfurimonas denitrificans (strain ATCC 33889 / DSM 1251) (Thiomicrospira denitrificans (strain ATCC 33889 / DSM 1251)).